A 313-amino-acid chain; its full sequence is tRNA dimethylallyltransferase (313 aa).

10 to 17 (GPTASGKT) is a binding site for ATP. Substrate is bound at residue 12–17 (TASGKT). Interaction with substrate tRNA regions lie at residues 35–38 (DSAM), 159–163 (QRIQR), and 240–245 (RCVGYR).

It belongs to the IPP transferase family. In terms of assembly, monomer. Mg(2+) serves as cofactor.

It carries out the reaction adenosine(37) in tRNA + dimethylallyl diphosphate = N(6)-dimethylallyladenosine(37) in tRNA + diphosphate. In terms of biological role, catalyzes the transfer of a dimethylallyl group onto the adenine at position 37 in tRNAs that read codons beginning with uridine, leading to the formation of N6-(dimethylallyl)adenosine (i(6)A). The protein is tRNA dimethylallyltransferase of Legionella pneumophila (strain Lens).